The primary structure comprises 526 residues: Choline/ethanolamine transporter FLVCR2 (526 aa).

The disordered stretch occupies residues 1 to 70 (MVNEGPNQEE…PSGLAHPSSS (70 aa)). The Cytoplasmic portion of the chain corresponds to 1-76 (MVNEGPNQEE…PSSSGPEDLS (76 aa)). Position 1–84 (1–84 (MVNEGPNQEE…LSVIKVSRRR (84 aa))) interacts with heme b. Repeat copies occupy residues 25–30 (PSVSVH), 31–36 (PSVSVH), 37–42 (PSVSIN), 43–48 (PSVSVH), and 49–54 (PSSSAH). The span at 25 to 56 (PSVSVHPSVSVHPSVSINPSVSVHPSSSAHPS) shows a compositional bias: low complexity. Residues 25 to 72 (PSVSVHPSVSVHPSVSINPSVSVHPSSSAHPSALAQPSGLAHPSSSGP) are 8 X 6 AA tandem repeats of P-S-[VS]-S-[VIAG]-[HNP]. One copy of the 6; approximate repeat lies at 55–60 (PSALAQ). A 7; approximate repeat occupies 61–66 (PSGLAH). Repeat unit 8 spans residues 67–72 (PSSSGP). A helical transmembrane segment spans residues 77 to 101 (VIKVSRRRWAVVLVFSCYSMCNSFQ). Residues asparagine 98 and tryptophan 102 each coordinate choline. At 102 to 119 (WIQYGSINNIFMHFYGVS) the chain is on the extracellular side. The helical transmembrane segment at 120–147 (AFAIDWLSMCYMLTYIPLLLPVAWLLEK) threads the bilayer. Residues 148–149 (FG) are Cytoplasmic-facing. Residues 150–169 (LRTIALTGSALNCLGAWVKL) form a helical membrane-spanning segment. The Extracellular segment spans residues 170–176 (GSLKPHL). A helical membrane pass occupies residues 177–205 (FPVTVVGQLICSVAQVFILGMPSRIASVW). Choline-binding residues include glutamine 191 and leucine 195. Residues 206–210 (FGANE) lie on the Cytoplasmic side of the membrane. A helical membrane pass occupies residues 211–236 (VSTACSVAVFGNQLGIAIGFLVPPVL). Residues 237-241 (VPNIE) lie on the Extracellular side of the membrane. Residues 242–271 (DRDELAYHISIMFYIIGGVATLLLILVIIV) form a helical membrane-spanning segment. The Cytoplasmic segment spans residues 272-307 (FKEKPKYPPSRAQSLSYALTSPDASYLGSIARLFKN). A helical membrane pass occupies residues 308-338 (LNFVLLVITYGLNAGAFYALSTLLNRMVIWH). A choline-binding site is contributed by tyrosine 325. The Extracellular portion of the chain corresponds to 339–342 (YPGE). The helical transmembrane segment at 343-371 (EVNAGRIGLTIVIAGMLGAVISGIWLDRS) threads the bilayer. Residues 372-373 (KT) lie on the Cytoplasmic side of the membrane. Residues 374-396 (YKETTLVVYIMTLVGMVVYTFTL) form a helical membrane-spanning segment. At 397 to 399 (NLG) the chain is on the extracellular side. A helical membrane pass occupies residues 400 to 429 (HLWVVFITAGTMGFFMTGYLPLGFEFAVEL). Residues 430–437 (TYPESEGI) are Cytoplasmic-facing. The helical transmembrane segment at 438 to 463 (SSGLLNISAQVFGIIFTISQGQIIDN) threads the bilayer. Choline is bound at residue glutamine 447. Residues 464-465 (YG) are Extracellular-facing. Residues 466–488 (TKPGNIFLCVFLTLGAALTAFIK) form a helical membrane-spanning segment. The Cytoplasmic segment spans residues 489–526 (ADLRRQKANKETLENKLQEEEEESNTSKVPTAVSEDHL). The tract at residues 500-526 (TLENKLQEEEEESNTSKVPTAVSEDHL) is disordered. Serine 515 carries the post-translational modification Phosphoserine.

Belongs to the major facilitator superfamily. Feline leukemia virus subgroup C receptor (TC 2.A.1.28.1) family. Interacts with components of electron transfer chain complexes III, IV and V including CYC1, NDUFA4, COX4I1, ATP5PD and ATP5F1C; these interactions occur in the absence of heme and are disrupted upon heme binding. Interacts with ATP2A2; this interaction occurs in the absence of heme and promotes ATP2A2 proteasomal degradation; the complex is dissociated upon heme binding. Interacts with HMOX1; this interaction is potentiated in the presence of heme. As to expression, expressed in non-hematopoietic tissues, with relative abundant expression in brain, placenta, lung, liver and kidney. Also expressed in hematopoietic tissues (fetal liver, spleen, lymph node, thymus, leukocytes and bone marrow). Found in acidophil cells of the pituitary that secrete growth hormone and prolactin (at protein level).

The protein resides in the cell membrane. It is found in the mitochondrion membrane. The protein localises to the endoplasmic reticulum membrane. It carries out the reaction choline(out) = choline(in). The catalysed reaction is ethanolamine(in) = ethanolamine(out). The enzyme catalyses heme b(in) = heme b(out). Functionally, choline uniporter that specifically mediates choline uptake at the blood-brain-barrier. Responsible for the majority of choline uptake across the blood-brain-barrier from the circulation into the brain. Choline, a nutrient critical for brain development, is a precursor of phosphatidylcholine, as well as betaine. Also mediates transport of ethanolamine. Choline and ethanolamine transport is not coupled with proton transport and is exclusively driven by the choline gradient across the plasma membrane. However, the presence of an inwardly directed proton gradient enhances choline uptake. Also acts as a heme b transporter. Required to regulate mitochondrial respiration processes, ATP synthesis and thermogenesis. At low heme levels, interacts with components of electron transfer chain (ETC) complexes and ATP2A2, leading to ubiquitin-mediated degradation of ATP2A2 and inhibition of thermogenesis. Upon heme binding, dissociates from ETC complexes to allow switching from mitochondrial ATP synthesis to thermogenesis. The sequence is that of Choline/ethanolamine transporter FLVCR2 from Homo sapiens (Human).